A 167-amino-acid chain; its full sequence is MLFLDDAKMKNFTSCFKEKDFLKFFFNRLRLNKTSRYESEFPYISLCGRERNFIRCDDTPVVFTEQLRKDDTEVLSYAHAGQVLTLPYEPHKLYMDPRNGRVYHPAAPQVGGIGLVRSKLAIELSQHFEFLAGEASPTHFQWNGERLELQNEWVNNTQRFPMNEDCK.

Belongs to the UPF0598 family.

In Drosophila melanogaster (Fruit fly), this protein is UPF0598 protein CG30010.